The primary structure comprises 221 residues: Uracil-DNA glycosylase 1 (221 aa).

The active-site Proton acceptor is the D61.

Belongs to the uracil-DNA glycosylase (UDG) superfamily. UNG family.

Its subcellular location is the cytoplasm. The catalysed reaction is Hydrolyzes single-stranded DNA or mismatched double-stranded DNA and polynucleotides, releasing free uracil.. Its function is as follows. Excises uracil residues from the DNA which can arise as a result of misincorporation of dUMP residues by DNA polymerase or due to deamination of cytosine. In Listeria monocytogenes serotype 4b (strain F2365), this protein is Uracil-DNA glycosylase 1.